We begin with the raw amino-acid sequence, 564 residues long: 2-succinyl-5-enolpyruvyl-6-hydroxy-3-cyclohexene-1-carboxylate synthase (564 aa).

It belongs to the TPP enzyme family. MenD subfamily. Homodimer. Mg(2+) is required as a cofactor. Requires Mn(2+) as cofactor. Thiamine diphosphate serves as cofactor.

It carries out the reaction isochorismate + 2-oxoglutarate + H(+) = 5-enolpyruvoyl-6-hydroxy-2-succinyl-cyclohex-3-ene-1-carboxylate + CO2. The protein operates within quinol/quinone metabolism; 1,4-dihydroxy-2-naphthoate biosynthesis; 1,4-dihydroxy-2-naphthoate from chorismate: step 2/7. It participates in quinol/quinone metabolism; menaquinone biosynthesis. Functionally, catalyzes the thiamine diphosphate-dependent decarboxylation of 2-oxoglutarate and the subsequent addition of the resulting succinic semialdehyde-thiamine pyrophosphate anion to isochorismate to yield 2-succinyl-5-enolpyruvyl-6-hydroxy-3-cyclohexene-1-carboxylate (SEPHCHC). In Vibrio vulnificus (strain CMCP6), this protein is 2-succinyl-5-enolpyruvyl-6-hydroxy-3-cyclohexene-1-carboxylate synthase.